A 343-amino-acid chain; its full sequence is Major histocompatibility complex class I-related protein 1 (343 aa).

Positions 1–18 (MMFLLPFLTVFLAKQSHT) are cleaved as a signal peptide. Residues 19–105 (RTHSLRYFRL…RHLQRHYNHS (87 aa)) are alpha-1. Residues 19-197 (RTHSLRYFRL…EYGSDALERT (179 aa)) are antigen-binding cleft. At 19 to 298 (RTHSLRYFRL…QESGNTLLVA (280 aa)) the chain is on the extracellular side. 2 residues coordinate 8-(9H-purin-6-yl)-2-oxa-8-azabicyclo[3.3.1]nona-3,6-diene-4,6-dicarbaldehyde: Tyr-25 and Arg-27. The 5-(2-oxoethylideneamino)-6-(D-ribitylamino)uracil site is built by Arg-27, Ser-42, and Lys-61. 5-(2-oxopropylideneamino)-6-(D-ribitylamino)uracil contacts are provided by Arg-27, Ser-42, and Lys-61. Arg-27, Ser-42, and Lys-61 together coordinate 7-hydroxy-6-methyl-8-(1-D-ribityl)lumazine. Residues Lys-61 and His-76 each contribute to the 8-(9H-purin-6-yl)-2-oxa-8-azabicyclo[3.3.1]nona-3,6-diene-4,6-dicarbaldehyde site. Lys-61 lines the 2-amino-4-oxopteridine-6-carbaldehyde pocket. Lys-61 is a binding site for pyridoxal. A glycan (N-linked (GlcNAc...) asparagine) is linked at Asn-103. An alpha-2 region spans residues 106–197 (GLHTYQRMIG…EYGSDALERT (92 aa)). Arg-112 serves as a coordination point for 8-(9H-purin-6-yl)-2-oxa-8-azabicyclo[3.3.1]nona-3,6-diene-4,6-dicarbaldehyde. Arg-112, Tyr-170, and Gln-171 together coordinate 5-(2-oxoethylideneamino)-6-(D-ribitylamino)uracil. Arg-112, Tyr-170, and Gln-171 together coordinate 5-(2-oxopropylideneamino)-6-(D-ribitylamino)uracil. The 7-hydroxy-6-methyl-8-(1-D-ribityl)lumazine site is built by Arg-112, Tyr-170, and Gln-171. Intrachain disulfides connect Cys-116-Cys-179 and Cys-218-Cys-274. An alpha-3 region spans residues 198–289 (EHPVVRTTRK…GLQMVLEAPQ (92 aa)). The region spanning 200-302 (PVVRTTRKET…NTLLVANTIS (103 aa)) is the Ig-like C1-type domain. The interval 290–298 (ESGNTLLVA) is connecting peptide. Residues 299 to 319 (NTISGTIILIIVLAGVGALIW) form a helical membrane-spanning segment. At 320–343 (RRRSREPKEVMYQPTQVNEGSSPS) the chain is on the cytoplasmic side.

Heterotrimer that consists of MR1, B2M and metabolite antigen. Major classes of metabolite ligands presented by MR1 include riboflavin-related antigens, pyrimidines and ribityl lumazines, nucleobase adducts and folate derivatives. Forms reversible covalent Schiff base complexes with microbial pyrimidine-based metabolite, which serves as a molecular switch triggering complete folding, stable association with B2M and translocation of the ternary complex from endoplasmic reticulum to the plasma membrane. Alternatively, forms non-Schiff base complexes with ribityl lumazines. On antigen-presenting cells, the ternary complex interacts with TCR on MR1-restricted T cells. Interacts with TAPBP and TAPBPL chaperones in the endoplasmic reticulum. TAPBP associated or not with MHC class I peptide loading complex binds ligand-free MR1 or MR1-B2M complex, providing for stable MR1 pools ready for metabolite antigen processing. TAPBPL interacts with MR1 in a ligand-independent way; this interaction may stabilize MR1 pool and facilitate ligand loading and dissociation. Structurally, MR1-B2M heterodimer adopts a topology similar to classical MHC class I molecules, with alpha-1 and alpha-2 domains of MR1 forming the antigen-binding cleft composed of two alpha-helices resting on a floor of 7-stranded anti-parallel beta-pleated sheet. MR1-B2M heterodimer (via alpha-helices) interacts with TCR (via CDR domains). Post-translationally, N-glycosylated. In terms of tissue distribution, expressed in kidney, liver, testis, spleen, thymus, brain, and heart.

The protein resides in the cell membrane. The protein localises to the endoplasmic reticulum membrane. It is found in the golgi apparatus membrane. It localises to the early endosome membrane. Its subcellular location is the late endosome membrane. Antigen-presenting molecule specialized in displaying microbial pyrimidine-based metabolites to alpha-beta T cell receptors (TCR) on innate-type mucosal-associated invariant T (MAIT) cells. In complex with B2M preferentially presents riboflavin-derived metabolites to semi-invariant TCRs on MAIT cells, guiding immune surveillance of the microbial metabolome at mucosal epithelial barriers. Signature pyrimidine-based microbial antigens are generated via non-enzymatic condensation of metabolite intermediates of the riboflavin pathway with by-products arising from other metabolic pathways such as glycolysis. Typical potent antigenic metabolites are 5-(2-oxoethylideneamino)-6-D-ribitylaminouracil (5-OE-RU) and 5-(2-oxopropylideneamino)-6-D-ribitylaminouracil (5-OP-RU), products of condensation of 5-amino-6-D-ribityaminouracil (5-A-RU) with glyoxal or methylglyoxal by-products, respectively. May present microbial antigens to various MAIT cell subsets, providing for unique recognition of diverse microbes, including pathogens that do not synthesize riboflavin. Upon antigen recognition, elicits rapid innate-type MAIT cell activation to eliminate pathogenic microbes by directly killing infected cells. During T cell development, drives thymic selection and post-thymic terminal differentiation of MAIT cells in a process dependent on commensal microflora. Acts as an immune sensor of cancer cell metabolome. May present a tumor-specific or -associated metabolite essential for cancer cell survival to a pan-cancer TCR on a non-MAIT CD8-positive T cell clone, triggering T cell-mediated killing of a wide range of cancer cell types. May present tumor-enriched pyridoxal and pyridoxal 5'-phosphate antigens, enabling preferential recognition of cancer cells. Presents nucleobase carbonyl adducts generated during oxidative stress. Captures M3Ade, a nucleobase adduct composed of one adenine modified by a malondialdehyde trimer, for recognition by MR1-restricted T cell clones expressing a polyclonal TCR repertoire. This chain is Major histocompatibility complex class I-related protein 1, found in Rattus norvegicus (Rat).